The chain runs to 115 residues: NADH-ubiquinone oxidoreductase chain 3 (115 aa).

3 helical membrane passes run 4 to 24 (LMILSVNIILSTCLIMIAFWL), 55 to 75 (FFLVAITFLLFDLEIALLLPL), and 84 to 104 (INMMMSTAFILVSILALGLAY).

The protein belongs to the complex I subunit 3 family. Core subunit of respiratory chain NADH dehydrogenase (Complex I) which is composed of 45 different subunits. Interacts with TMEM186. Interacts with TMEM242.

The protein resides in the mitochondrion inner membrane. It catalyses the reaction a ubiquinone + NADH + 5 H(+)(in) = a ubiquinol + NAD(+) + 4 H(+)(out). Its function is as follows. Core subunit of the mitochondrial membrane respiratory chain NADH dehydrogenase (Complex I) which catalyzes electron transfer from NADH through the respiratory chain, using ubiquinone as an electron acceptor. Essential for the catalytic activity of complex I. The polypeptide is NADH-ubiquinone oxidoreductase chain 3 (Podomys floridanus (Florida mouse)).